We begin with the raw amino-acid sequence, 334 residues long: MGPLMLDVLGYELNAEEREIIQHPTVGGIIFFARNYHDRAQLRALTKDIRKTAAKPLLIAVDQEGGRVQRFREEFTQLPPARAFEQHNNGIELAKKGGWLMAAELLAMDIDLSLAPVLDLGFDCKAIGDRAFSDDPKKIIKYASQFIKGMKQAGMATTGKHFPGHGGVIADSHLETPFDSRENIKEHDMIVFKYLIENNLLDAMMPAHVVFDAYDDKPASGSDYWLKQVLRQDLHFKGVIFSDDLNMKGADVMGSYSERAIAAQQAGCDMVMLCNNREGAIQALDGLPQVNVPILDTLLKRPTGEYQELIKTSMWKETEKEISRLSLEWREKHS.

Substrate contacts are provided by residues Asp62, Arg70, Arg130, and 160-161 (KH). Residue His173 is the Proton donor/acceptor of the active site. Asp243 (nucleophile) is an active-site residue.

It belongs to the glycosyl hydrolase 3 family. NagZ subfamily.

It localises to the cytoplasm. The catalysed reaction is Hydrolysis of terminal non-reducing N-acetyl-D-hexosamine residues in N-acetyl-beta-D-hexosaminides.. It participates in cell wall biogenesis; peptidoglycan recycling. In terms of biological role, plays a role in peptidoglycan recycling by cleaving the terminal beta-1,4-linked N-acetylglucosamine (GlcNAc) from peptide-linked peptidoglycan fragments, giving rise to free GlcNAc, anhydro-N-acetylmuramic acid and anhydro-N-acetylmuramic acid-linked peptides. This is Beta-hexosaminidase from Photobacterium profundum (strain SS9).